We begin with the raw amino-acid sequence, 209 residues long: ATP-dependent dethiobiotin synthetase BioD (209 aa).

Position 13 to 18 (13 to 18) interacts with ATP; that stretch reads DVGKTV. Residue threonine 17 participates in Mg(2+) binding. Lysine 33 is an active-site residue. Residue glutamate 100 coordinates Mg(2+). ATP-binding positions include 100–103 and 184–186; these read EGAG and PRL.

This sequence belongs to the dethiobiotin synthetase family. In terms of assembly, homodimer. The cofactor is Mg(2+).

It is found in the cytoplasm. The enzyme catalyses (7R,8S)-7,8-diammoniononanoate + CO2 + ATP = (4R,5S)-dethiobiotin + ADP + phosphate + 3 H(+). It participates in cofactor biosynthesis; biotin biosynthesis; biotin from 7,8-diaminononanoate: step 1/2. In terms of biological role, catalyzes a mechanistically unusual reaction, the ATP-dependent insertion of CO2 between the N7 and N8 nitrogen atoms of 7,8-diaminopelargonic acid (DAPA, also called 7,8-diammoniononanoate) to form a ureido ring. This chain is ATP-dependent dethiobiotin synthetase BioD, found in Rhizorhabdus wittichii (strain DSM 6014 / CCUG 31198 / JCM 15750 / NBRC 105917 / EY 4224 / RW1) (Sphingomonas wittichii).